The primary structure comprises 254 residues: Dihydroorotate dehydrogenase B (NAD(+)), electron transfer subunit (254 aa).

The FAD-binding FR-type domain occupies M1–I99. FAD is bound by residues R50 to S53, L67 to R69, and G74 to T75. [2Fe-2S] cluster-binding residues include C218, C223, C226, and C241.

Belongs to the PyrK family. As to quaternary structure, heterotetramer of 2 PyrK and 2 PyrD type B subunits. The cofactor is [2Fe-2S] cluster. FAD is required as a cofactor.

It participates in pyrimidine metabolism; UMP biosynthesis via de novo pathway; orotate from (S)-dihydroorotate (NAD(+) route): step 1/1. Responsible for channeling the electrons from the oxidation of dihydroorotate from the FMN redox center in the PyrD type B subunit to the ultimate electron acceptor NAD(+). The polypeptide is Dihydroorotate dehydrogenase B (NAD(+)), electron transfer subunit (Listeria monocytogenes serotype 4b (strain F2365)).